Consider the following 154-residue polypeptide: Nuclear cap-binding protein subunit 2-A (154 aa).

Residues Tyr-10, Tyr-33, 102-106, 113-117, and 123-124 each bind mRNA; these read RVDWD, RQYGR, and QV. The region spanning 30 to 108 is the RRM domain; sequence STLYVGNLSF…RLIRVDWDAG (79 aa).

This sequence belongs to the RRM NCBP2 family. Component of the nuclear cap-binding complex (CBC), a heterodimer composed of Cbp80 and Cbp20 that interacts with m7GpppG-capped RNA. Interacts with Ars2.

The protein resides in the nucleus. Functionally, component of the cap-binding complex (CBC), which binds co-transcriptionally to the 5' cap of pre-mRNAs and is involved in various processes such as pre-mRNA splicing and RNA-mediated gene silencing (RNAi). The CBC complex is involved in miRNA-mediated RNA interference via its interaction with Ars2 and is required for primary microRNAs (miRNAs) processing. Also involved in innate immunity via the short interfering RNAs (siRNAs) processing machinery by restricting the viral RNA production. In the CBC complex, Cbp20 recognizes and binds capped RNAs (m7GpppG-capped RNA) but requires Cbp80 to stabilize the movement of its N-terminal loop and lock the CBC into a high affinity cap-binding state with the cap structure. The chain is Nuclear cap-binding protein subunit 2-A (Cbp20-A) from Drosophila virilis (Fruit fly).